Reading from the N-terminus, the 195-residue chain is Translation machinery-associated protein 22 (195 aa).

Residues 94 to 165 (VLIKRIERNR…EAKEYIEKLL (72 aa)) enclose the SUI1 domain. The segment at 176-195 (EQVDEKKKKKATAPGATPAA) is disordered.

It belongs to the DENR family. As to quaternary structure, interacts with the 40S ribosomal subunit.

It is found in the cytoplasm. In Scheffersomyces stipitis (strain ATCC 58785 / CBS 6054 / NBRC 10063 / NRRL Y-11545) (Yeast), this protein is Translation machinery-associated protein 22 (TMA22).